Reading from the N-terminus, the 98-residue chain is NADH-ubiquinone oxidoreductase chain 4L (98 aa).

The next 3 membrane-spanning stretches (helical) occupy residues 1 to 21 (MSMV…GMLV), 29 to 49 (SLLC…VTIL), and 61 to 81 (IVLL…LVMV).

It belongs to the complex I subunit 4L family. In terms of assembly, core subunit of respiratory chain NADH dehydrogenase (Complex I) which is composed of 45 different subunits.

It localises to the mitochondrion inner membrane. The catalysed reaction is a ubiquinone + NADH + 5 H(+)(in) = a ubiquinol + NAD(+) + 4 H(+)(out). In terms of biological role, core subunit of the mitochondrial membrane respiratory chain NADH dehydrogenase (Complex I) which catalyzes electron transfer from NADH through the respiratory chain, using ubiquinone as an electron acceptor. Part of the enzyme membrane arm which is embedded in the lipid bilayer and involved in proton translocation. The chain is NADH-ubiquinone oxidoreductase chain 4L (MT-ND4L) from Canis latrans (Coyote).